The chain runs to 319 residues: MEEDQEEPPSSSTSSESPEVVLKAPKAPTRRRKNSKKDRRQDMEVDDGEKESTAQYCKGFYDALRVMQTTNKYEFTGGAVSSPVLPVLQTAAFSPITPASASDMHTIVMSLLGNTPITSGPSIAPLSSPTLLPLVTSGDLDDLSMKILASSAIPGPPIISSSNSPDSSTTAVTTSQITAFQPLLNNFVSSTTASTSRPDKLNLTPPQQSAEIYAFNGVNSDDSDGGLDSRSASRCGMALDDQEKKKLERKRARNRQAATKCRQKKMDRIKELEEQVLHEKHRGQRLDAELLELNRALEHFRRTVEHHSGNGCPNNSIRV.

2 disordered regions span residues 1-52 and 216-264; these read MEED…EKES and NGVN…CRQK. A compositionally biased stretch (low complexity) spans 8-19; it reads PPSSSTSSESPE. Basic residues predominate over residues 28–38; that stretch reads PTRRRKNSKKD. The segment at 244–285 is basic motif; that stretch reads KKKLERKRARNRQAATKCRQKKMDRIKELEEQVLHEKHRGQR. The bZIP domain occupies 244–307; the sequence is KKKLERKRAR…EHFRRTVEHH (64 aa). Residues 286 to 293 form a leucine-zipper region; the sequence is LDAELLEL.

This sequence belongs to the bZIP family. Jun subfamily. Heterodimer; with fos-1. As to expression, isoform a, isoform b, isoform c and isoform d are expressed in the spermatheca.

The protein resides in the nucleus. Its function is as follows. Transcription factor that recognizes and binds to the AP-1 non-canonical enhancer heptamer motif 5'-TTAGTCA-3'. Required for ovulation. Controls plc-1 expression in the spermatheca to regulate spermathecal valve dilation. The polypeptide is Transcription factor jun-1 (Caenorhabditis elegans).